Consider the following 258-residue polypeptide: Octanoyltransferase (258 aa).

The region spanning 42 to 226 (NVGTDTLLLL…AVVAALDGEL (185 aa)) is the BPL/LPL catalytic domain. Residues 80 to 87 (RGGKITWH), 156 to 158 (AIG), and 169 to 171 (GFS) contribute to the substrate site. The active-site Acyl-thioester intermediate is the Cys187.

This sequence belongs to the LipB family.

The protein resides in the cytoplasm. It catalyses the reaction octanoyl-[ACP] + L-lysyl-[protein] = N(6)-octanoyl-L-lysyl-[protein] + holo-[ACP] + H(+). Its pathway is protein modification; protein lipoylation via endogenous pathway; protein N(6)-(lipoyl)lysine from octanoyl-[acyl-carrier-protein]: step 1/2. Catalyzes the transfer of endogenously produced octanoic acid from octanoyl-acyl-carrier-protein onto the lipoyl domains of lipoate-dependent enzymes. Lipoyl-ACP can also act as a substrate although octanoyl-ACP is likely to be the physiological substrate. This Rhodococcus jostii (strain RHA1) protein is Octanoyltransferase.